The chain runs to 418 residues: D-amino acid dehydrogenase (418 aa).

3 to 17 (VLILGSGVVGVATAY) is an FAD binding site.

This sequence belongs to the DadA oxidoreductase family. FAD is required as a cofactor.

The catalysed reaction is a D-alpha-amino acid + A + H2O = a 2-oxocarboxylate + AH2 + NH4(+). It functions in the pathway amino-acid degradation; D-alanine degradation; NH(3) and pyruvate from D-alanine: step 1/1. Oxidative deamination of D-amino acids. The polypeptide is D-amino acid dehydrogenase (Granulibacter bethesdensis (strain ATCC BAA-1260 / CGDNIH1)).